The following is a 194-amino-acid chain: Probable RNA 2'-phosphotransferase (194 aa).

This sequence belongs to the KptA/TPT1 family.

Its function is as follows. Removes the 2'-phosphate from RNA via an intermediate in which the phosphate is ADP-ribosylated by NAD followed by a presumed transesterification to release the RNA and generate ADP-ribose 1''-2''-cyclic phosphate (APPR&gt;P). May function as an ADP-ribosylase. The protein is Probable RNA 2'-phosphotransferase of Escherichia coli O45:K1 (strain S88 / ExPEC).